Here is a 26-residue protein sequence, read N- to C-terminus: Neprilysin (26 aa).

This sequence belongs to the peptidase M13 family. The cofactor is Zn(2+).

It is found in the cell membrane. The enzyme catalyses Preferential cleavage of polypeptides between hydrophobic residues, particularly with Phe or Tyr at P1'.. It carries out the reaction substance P + H2O = substance P(1-9) + L-Leu-L-Met-NH2. The catalysed reaction is substance P + H2O = substance P(1-7) + L-Phe-Gly-L-Leu-L-Met-NH2. It catalyses the reaction neurotensin + H2O = neurotensin(1-11) + L-isoleucyl-L-leucine. The enzyme catalyses neurotensin + H2O = neurotensin(1-10) + L-tyrosyl-L-isoleucyl-L-leucine. Functionally, thermolysin-like specificity, but is almost confined on acting on polypeptides of up to 30 amino acids. Biologically important in the destruction of opioid peptides such as Met- and Leu-enkephalins by cleavage of a Gly-Phe bond. Catalyzes cleavage of bradykinin, substance P and neurotensin peptides. Able to cleave angiotensin-1, angiotensin-2 and angiotensin 1-9. Involved in the degradation of atrial natriuretic factor (ANF) and brain natriuretic factor (BNP(1-32)). Displays UV-inducible elastase activity toward skin preelastic and elastic fibers. In Sus scrofa (Pig), this protein is Neprilysin (MME).